Consider the following 562-residue polypeptide: MKKKKQALKVLLSVGILSSSFAFAHTSSAAPNNVLSTEKYNKEIKSPEFISGKLSGPSSQKAQDVVFHYMNTNKDKYKLGNESAQNSFKVTEVVKDPVEQATVVRLQQVYNNIPVWGSTQLAHVAKDGTLKVVSGTVAPDLDKKEKLKGQKQVDSKKAIQAAEKDLGFKPTYEKSPSSELYVYQNASDTTYAYVVNLNFLSPEPGNYYYFVDAISGKVLDKYNTIDSVAGPKADVKQAAKPAAKPVTGTNTIGSGKGVLGDTKSLKTTLSSSTYYLQDNTRGATIYTYDAKNRTSLPGTLWADTDNTYNATRDAAAVDAHYYAGVTYDYYKNKFNRNSYDNAGRPLKSTVHYSSGYNNAFWNGSQMVYGDGDGTTFVPLSGGLDVIGHELTHALTERSSNLIYQYESGALNEAISDIFGTLVEYYDNRNPDWEIGEDIYTPGTSGDALRSMSNPAKYGDPDHYSKRYTGSSDNGGVHTNSGIINKAAYLLANGGTHYGVTVTGIGGDKLGKIYYRANTLYFTQSTTFSQARAGLVQAAADLYGSGSQEVISVGKSFDAVGVQ.

The first 24 residues, 1–24 (MKKKKQALKVLLSVGILSSSFAFA), serve as a signal peptide directing secretion. Residues 25 to 245 (HTSSAAPNNV…KQAAKPAAKP (221 aa)) constitute a propeptide, activation peptide. Positions 303, 305, and 384 each coordinate Ca(2+). A Zn(2+)-binding site is contributed by His388. Glu389 is an active-site residue. His392 and Glu412 together coordinate Zn(2+). Ca(2+) contacts are provided by Glu423, Asn429, Asp431, Glu433, Glu436, Tyr439, Thr440, and Asp446. His477 (proton donor) is an active-site residue.

This sequence belongs to the peptidase M4 family. It depends on Ca(2+) as a cofactor. The cofactor is Zn(2+).

Its subcellular location is the secreted. It carries out the reaction Similar, but not identical, to that of thermolysin.. Its function is as follows. Extracellular zinc metalloprotease. This is Bacillolysin from Priestia megaterium (strain ATCC 14581 / DSM 32 / CCUG 1817 / JCM 2506 / NBRC 15308 / NCIMB 9376 / NCTC 10342 / NRRL B-14308 / VKM B-512 / Ford 19) (Bacillus megaterium).